The primary structure comprises 125 residues: Splicing factor 3B subunit 6 (125 aa).

The interval 16–29 (EVNRILYIRNLPYK) is interaction with pre-mRNA branch site. In terms of domain architecture, RRM spans 19-94 (RILYIRNLPY…RYLVVLYYNA (76 aa)). At Lys29 the chain carries N6-acetyllysine; alternate. Lys29 is covalently cross-linked (Glycyl lysine isopeptide (Lys-Gly) (interchain with G-Cter in SUMO2); alternate). Lys41 is subject to N6-acetyllysine.

Component of the 17S U2 SnRNP complex, a ribonucleoprotein complex that contains small nuclear RNA (snRNA) U2 and a number of specific proteins. Part of the SF3B subcomplex of the 17S U2 SnRNP complex. SF3B associates with the splicing subcomplex SF3A and a 12S RNA unit to form the U2 small nuclear ribonucleoproteins complex (U2 snRNP). Within the SF3B complex interacts directly with SF3B1. Component of the minor spliceosome, which splices U12-type introns.

It localises to the nucleus. Functionally, component of the 17S U2 SnRNP complex of the spliceosome, a large ribonucleoprotein complex that removes introns from transcribed pre-mRNAs. The 17S U2 SnRNP complex (1) directly participates in early spliceosome assembly and (2) mediates recognition of the intron branch site during pre-mRNA splicing by promoting the selection of the pre-mRNA branch-site adenosine, the nucleophile for the first step of splicing. Within the 17S U2 SnRNP complex, SF3B6 is part of the SF3B subcomplex, which is required for 'A' complex assembly formed by the stable binding of U2 snRNP to the branchpoint sequence in pre-mRNA. Sequence independent binding of SF3A and SF3B subcomplexes upstream of the branch site is essential, it may anchor U2 snRNP to the pre-mRNA. Within the 17S U2 SnRNP complex, SF3B6 directly contacts the pre-mRNA branch site adenosine for the first catalytic step of splicing. SF3B6 stabilizes the intron branch site-U2 snRNA duplex, thereby promoting-binding of introns with poor sequence complementarity. Also acts as a component of the minor spliceosome, which is involved in the splicing of U12-type introns in pre-mRNAs. In Mus musculus (Mouse), this protein is Splicing factor 3B subunit 6 (Sf3b6).